A 432-amino-acid polypeptide reads, in one-letter code: Gamma-glutamyl phosphate reductase (432 aa).

This sequence belongs to the gamma-glutamyl phosphate reductase family.

Its subcellular location is the cytoplasm. It carries out the reaction L-glutamate 5-semialdehyde + phosphate + NADP(+) = L-glutamyl 5-phosphate + NADPH + H(+). It participates in amino-acid biosynthesis; L-proline biosynthesis; L-glutamate 5-semialdehyde from L-glutamate: step 2/2. Its function is as follows. Catalyzes the NADPH-dependent reduction of L-glutamate 5-phosphate into L-glutamate 5-semialdehyde and phosphate. The product spontaneously undergoes cyclization to form 1-pyrroline-5-carboxylate. The sequence is that of Gamma-glutamyl phosphate reductase from Deinococcus radiodurans (strain ATCC 13939 / DSM 20539 / JCM 16871 / CCUG 27074 / LMG 4051 / NBRC 15346 / NCIMB 9279 / VKM B-1422 / R1).